The chain runs to 273 residues: Putative phosphoenolpyruvate synthase regulatory protein (273 aa).

Residue 153-160 (AVSRAGKT) participates in ADP binding.

It belongs to the pyruvate, phosphate/water dikinase regulatory protein family. PSRP subfamily.

The enzyme catalyses [pyruvate, water dikinase] + ADP = [pyruvate, water dikinase]-phosphate + AMP + H(+). It carries out the reaction [pyruvate, water dikinase]-phosphate + phosphate + H(+) = [pyruvate, water dikinase] + diphosphate. Bifunctional serine/threonine kinase and phosphorylase involved in the regulation of the phosphoenolpyruvate synthase (PEPS) by catalyzing its phosphorylation/dephosphorylation. This chain is Putative phosphoenolpyruvate synthase regulatory protein, found in Xanthomonas campestris pv. campestris (strain 8004).